A 201-amino-acid polypeptide reads, in one-letter code: Peptide deformylase (201 aa).

2 residues coordinate Fe cation: Cys-92 and His-134. Glu-135 is a catalytic residue. His-138 contributes to the Fe cation binding site.

It belongs to the polypeptide deformylase family. The cofactor is Fe(2+).

It carries out the reaction N-terminal N-formyl-L-methionyl-[peptide] + H2O = N-terminal L-methionyl-[peptide] + formate. Removes the formyl group from the N-terminal Met of newly synthesized proteins. Requires at least a dipeptide for an efficient rate of reaction. N-terminal L-methionine is a prerequisite for activity but the enzyme has broad specificity at other positions. The protein is Peptide deformylase of Rhodopirellula baltica (strain DSM 10527 / NCIMB 13988 / SH1).